The chain runs to 1171 residues: ATP-dependent helicase/deoxyribonuclease subunit B (1171 aa).

One can recognise a UvrD-like helicase ATP-binding domain in the interval Met-1–Arg-343. Gly-8–Ser-15 lines the ATP pocket. Positions Met-281 to Asp-587 constitute a UvrD-like helicase C-terminal domain. 4 residues coordinate [4Fe-4S] cluster: Cys-805, Cys-1129, Cys-1132, and Cys-1138.

It belongs to the helicase family. AddB/RexB type 1 subfamily. In terms of assembly, heterodimer of AddA and AddB. Requires Mg(2+) as cofactor. [4Fe-4S] cluster serves as cofactor.

Functionally, the heterodimer acts as both an ATP-dependent DNA helicase and an ATP-dependent, dual-direction single-stranded exonuclease. Recognizes the chi site generating a DNA molecule suitable for the initiation of homologous recombination. The AddB subunit has 5' -&gt; 3' nuclease activity but not helicase activity. This Bacillus thuringiensis (strain Al Hakam) protein is ATP-dependent helicase/deoxyribonuclease subunit B.